The sequence spans 229 residues: Peptidase E (229 aa).

Active-site charge relay system residues include Ser120, Asp135, and His157.

The protein belongs to the peptidase S51 family.

It localises to the cytoplasm. It carries out the reaction Dipeptidase E catalyzes the hydrolysis of dipeptides Asp-|-Xaa. It does not act on peptides with N-terminal Glu, Asn or Gln, nor does it cleave isoaspartyl peptides.. Functionally, hydrolyzes dipeptides containing N-terminal aspartate residues. May play a role in allowing the cell to use peptide aspartate to spare carbon otherwise required for the synthesis of the aspartate family of amino acids. The sequence is that of Peptidase E from Salmonella paratyphi C (strain RKS4594).